The following is a 394-amino-acid chain: Protein TsgA homolog (394 aa).

12 helical membrane-spanning segments follow: residues 11–31 (WISY…GIVM), 51–71 (FLNA…EIIP), 76–96 (LVFG…GHNL), 101–121 (ISMF…TFLV), 134–154 (LLFT…AAAM), 162–182 (WYWV…LTLC), 206–226 (VGVL…LGFI), 246–266 (QLVS…SFIL), 274–294 (IVTV…STDN), 302–322 (ILAL…LGSL), 334–354 (FILT…GPIV), and 363–383 (LATA…LGFF).

It belongs to the major facilitator superfamily. TsgA family.

It localises to the cell inner membrane. The polypeptide is Protein TsgA homolog (Yersinia pseudotuberculosis serotype O:1b (strain IP 31758)).